The primary structure comprises 225 residues: Putative N-acetylmannosamine-6-phosphate 2-epimerase (225 aa).

The protein belongs to the NanE family.

It catalyses the reaction an N-acyl-D-glucosamine 6-phosphate = an N-acyl-D-mannosamine 6-phosphate. The protein operates within amino-sugar metabolism; N-acetylneuraminate degradation; D-fructose 6-phosphate from N-acetylneuraminate: step 3/5. Its function is as follows. Converts N-acetylmannosamine-6-phosphate (ManNAc-6-P) to N-acetylglucosamine-6-phosphate (GlcNAc-6-P). This chain is Putative N-acetylmannosamine-6-phosphate 2-epimerase, found in Vibrio vulnificus (strain CMCP6).